The chain runs to 123 residues: Phosphoribosyl-AMP cyclohydrolase (123 aa).

Position 73 (aspartate 73) interacts with Mg(2+). Cysteine 74 provides a ligand contact to Zn(2+). Aspartate 75 and aspartate 77 together coordinate Mg(2+). Zn(2+) contacts are provided by cysteine 90 and cysteine 97.

It belongs to the PRA-CH family. As to quaternary structure, homodimer. The cofactor is Mg(2+). It depends on Zn(2+) as a cofactor.

Its subcellular location is the cytoplasm. The enzyme catalyses 1-(5-phospho-beta-D-ribosyl)-5'-AMP + H2O = 1-(5-phospho-beta-D-ribosyl)-5-[(5-phospho-beta-D-ribosylamino)methylideneamino]imidazole-4-carboxamide. It participates in amino-acid biosynthesis; L-histidine biosynthesis; L-histidine from 5-phospho-alpha-D-ribose 1-diphosphate: step 3/9. In terms of biological role, catalyzes the hydrolysis of the adenine ring of phosphoribosyl-AMP. The sequence is that of Phosphoribosyl-AMP cyclohydrolase from Methanoregula boonei (strain DSM 21154 / JCM 14090 / 6A8).